The sequence spans 316 residues: Cytochrome c biogenesis protein CcsA (316 aa).

7 consecutive transmembrane segments (helical) span residues 15–35 (FSIC…TTIL), 44–64 (GIIT…IYSG), 71–91 (LYES…VAYL), 142–162 (MILS…LLVI), 220–240 (VISL…VWAN), 247–267 (WSWD…AIYL), and 281–301 (AIVA…VNLL).

The protein belongs to the CcmF/CycK/Ccl1/NrfE/CcsA family. In terms of assembly, may interact with Ccs1.

The protein resides in the plastid. It localises to the chloroplast thylakoid membrane. Required during biogenesis of c-type cytochromes (cytochrome c6 and cytochrome f) at the step of heme attachment. The protein is Cytochrome c biogenesis protein CcsA of Trachelium caeruleum (Blue throatwort).